The chain runs to 277 residues: Myelin proteolipid protein (277 aa).

Topologically, residues 2–10 (GLLECCARC) are cytoplasmic. Residues C6, C7, and C10 are each lipidated (S-palmitoyl cysteine). The chain crosses the membrane as a helical span at residues 11-36 (LIGAPFASLVATGLCFFGVALFCGCG). Residues 37–59 (HEALTGTEQLIETYFSKNYQDYE) are Extracellular-facing. A helical membrane pass occupies residues 60-88 (FLIDVIHGFQYFIYGTAAFFFLYGALLLA). The Cytoplasmic segment spans residues 89 to 151 (EGFYTTGAVR…LGKWLGHPDK (63 aa)). Residues C109, C139, and C141 are each lipidated (S-palmitoyl cysteine). A helical transmembrane segment spans residues 152-178 (FVGITYVLTIIWLLVFACSAVPVYIYF). Residues 179–238 (NTWTTCQSIGNPTKTSASIGTLCADARMYGILPWNAFPGKVCGSNLLSICKTSEFQMTFH) lie on the Extracellular side of the membrane. Cystine bridges form between C184–C228 and C201–C220. T199 is lipidated: O-palmitoyl threonine. Residues 239 to 268 (LFIAAFVGAAATLVSLVTFIIATTYNFAVL) form a helical membrane-spanning segment. Residues 269–277 (RLMGRGTKF) are Cytoplasmic-facing.

It belongs to the myelin proteolipid protein family.

Its subcellular location is the cell membrane. This is the major myelin protein from the central nervous system. It plays an important role in the formation or maintenance of the multilamellar structure of myelin. This is Myelin proteolipid protein (PLP1) from Taeniopygia guttata (Zebra finch).